The sequence spans 387 residues: S-adenosylmethionine synthase (387 aa).

H16 contacts ATP. D18 contributes to the Mg(2+) binding site. Position 44 (E44) interacts with K(+). 2 residues coordinate L-methionine: E57 and Q100. A flexible loop region spans residues 100–110 (QSADIAVGVDE). ATP is bound by residues 165–167 (DAK), D241, 247–248 (RK), A264, and K268. D241 serves as a coordination point for L-methionine. Residue K272 coordinates L-methionine.

This sequence belongs to the AdoMet synthase family. Homotetramer; dimer of dimers. Mg(2+) serves as cofactor. The cofactor is K(+).

Its subcellular location is the cytoplasm. The catalysed reaction is L-methionine + ATP + H2O = S-adenosyl-L-methionine + phosphate + diphosphate. It functions in the pathway amino-acid biosynthesis; S-adenosyl-L-methionine biosynthesis; S-adenosyl-L-methionine from L-methionine: step 1/1. In terms of biological role, catalyzes the formation of S-adenosylmethionine (AdoMet) from methionine and ATP. The overall synthetic reaction is composed of two sequential steps, AdoMet formation and the subsequent tripolyphosphate hydrolysis which occurs prior to release of AdoMet from the enzyme. The polypeptide is S-adenosylmethionine synthase (Marinomonas sp. (strain MWYL1)).